The chain runs to 584 residues: Eukaryotic translation initiation factor 3 subunit D (584 aa).

The tract at residues 118 to 184 is disordered; that stretch reads IFTRGRGQRG…KDYDKPQRNR (67 aa). Positions 127–167 are enriched in gly residues; sequence GRGGQDTRGGGRQQFQRGGRGGQQYGGGGYSDRGGGRGGGA. A compositionally biased stretch (basic and acidic residues) spans 173–184; sequence GWKDYDKPQRNR. The RNA gate stretch occupies residues 312–326; sequence ALDMVTVNENAADAP. A disordered region spans residues 563 to 584; sequence PANGLDDDDEGPEPEGVAEEED. Acidic residues predominate over residues 567 to 584; sequence LDDDDEGPEPEGVAEEED.

The protein belongs to the eIF-3 subunit D family. In terms of assembly, component of the eukaryotic translation initiation factor 3 (eIF-3) complex.

The protein resides in the cytoplasm. MRNA cap-binding component of the eukaryotic translation initiation factor 3 (eIF-3) complex, which is involved in protein synthesis of a specialized repertoire of mRNAs and, together with other initiation factors, stimulates binding of mRNA and methionyl-tRNAi to the 40S ribosome. The eIF-3 complex specifically targets and initiates translation of a subset of mRNAs involved in cell proliferation. In the eIF-3 complex, eif3d specifically recognizes and binds the 7-methylguanosine cap of a subset of mRNAs. The polypeptide is Eukaryotic translation initiation factor 3 subunit D (Chaetomium globosum (strain ATCC 6205 / CBS 148.51 / DSM 1962 / NBRC 6347 / NRRL 1970) (Soil fungus)).